Consider the following 130-residue polypeptide: Fluoride-specific ion channel FluC (130 aa).

A run of 4 helical transmembrane segments spans residues 3-23, 39-59, 67-87, and 102-122; these read FVFLWAALGGAIGSSLRYFVG, GTFSVNIIGCFVIGFMGHLAV, FGIFFITGVLGGFTTFSSYGL, and ISYVLGTNILGFIGVAIGWFL. The Na(+) site is built by Gly77 and Thr80.

The protein belongs to the fluoride channel Fluc/FEX (TC 1.A.43) family.

Its subcellular location is the cell inner membrane. It catalyses the reaction fluoride(in) = fluoride(out). With respect to regulation, na(+) is not transported, but it plays an essential structural role and its presence is essential for fluoride channel function. Functionally, fluoride-specific ion channel. Important for reducing fluoride concentration in the cell, thus reducing its toxicity. The sequence is that of Fluoride-specific ion channel FluC from Helicobacter pylori (strain P12).